A 256-amino-acid polypeptide reads, in one-letter code: Probable galactose dehydrogenase GalD (256 aa).

NAD(+) contacts are provided by residues 20–23 (GGGS), 71–72 (DL), and asparagine 98. Serine 150 serves as a coordination point for substrate. Tyrosine 163 serves as the catalytic Proton acceptor. Residues 163–167 (YSTAK) and isoleucine 196 each bind NAD(+).

This sequence belongs to the short-chain dehydrogenases/reductases (SDR) family.

Functionally, involved in the degradation of galactose via the DeLey-Doudoroff pathway. Catalyzes the oxidation of galactose in the presence of NAD(+). Uses NAD(+) as a hydrogen acceptor more efficiently than NADP(+). The chain is Probable galactose dehydrogenase GalD (galD) from Rhizobium meliloti (strain 1021) (Ensifer meliloti).